A 128-amino-acid chain; its full sequence is Cytochrome c-type biogenesis protein CcmE (128 aa).

At 1 to 8 (MQKRVRNR) the chain is on the cytoplasmic side. A helical; Signal-anchor for type II membrane protein transmembrane segment spans residues 9 to 29 (LITIIICFCSACLGISIILYN). At 30–128 (LEKNIVFFLP…KHDENYRPPQ (99 aa)) the chain is on the periplasmic side. Positions 120 and 124 each coordinate heme.

Belongs to the CcmE/CycJ family.

It is found in the cell inner membrane. Heme chaperone required for the biogenesis of c-type cytochromes. Transiently binds heme delivered by CcmC and transfers the heme to apo-cytochromes in a process facilitated by CcmF and CcmH. This is Cytochrome c-type biogenesis protein CcmE from Rickettsia conorii (strain ATCC VR-613 / Malish 7).